The sequence spans 211 residues: Protein DEHYDRATION-INDUCED 19 homolog 7 (211 aa).

Residue Thr113 is modified to Phosphothreonine. Residues 163–194 (GDSVAQVSPKDTSKSKIQQESFSNEDQEKAKK) are disordered. Positions 167–186 (AQVSPKDTSKSKIQQESFSN) are enriched in polar residues.

Belongs to the Di19 family. In terms of processing, not phosphorylated in vitro by CPK3 or CPK11. In terms of tissue distribution, expressed in seedlings, roots, leaves, stems, flowers and siliques.

It localises to the nucleus. Its function is as follows. Involved in both red and blue light signaling. The protein is Protein DEHYDRATION-INDUCED 19 homolog 7 (DI19-7) of Arabidopsis thaliana (Mouse-ear cress).